Consider the following 368-residue polypeptide: Phosphate acyltransferase (368 aa).

Belongs to the PlsX family. Homodimer. Probably interacts with PlsY.

It is found in the cytoplasm. It carries out the reaction a fatty acyl-[ACP] + phosphate = an acyl phosphate + holo-[ACP]. It participates in lipid metabolism; phospholipid metabolism. Catalyzes the reversible formation of acyl-phosphate (acyl-PO(4)) from acyl-[acyl-carrier-protein] (acyl-ACP). This enzyme utilizes acyl-ACP as fatty acyl donor, but not acyl-CoA. The protein is Phosphate acyltransferase of Cereibacter sphaeroides (strain ATCC 17025 / ATH 2.4.3) (Rhodobacter sphaeroides).